The following is a 64-amino-acid chain: Large ribosomal subunit protein bL35 (64 aa).

Belongs to the bacterial ribosomal protein bL35 family.

This Shewanella oneidensis (strain ATCC 700550 / JCM 31522 / CIP 106686 / LMG 19005 / NCIMB 14063 / MR-1) protein is Large ribosomal subunit protein bL35.